The primary structure comprises 447 residues: Probable glycine dehydrogenase (decarboxylating) subunit 1 (447 aa).

This sequence belongs to the GcvP family. N-terminal subunit subfamily. In terms of assembly, the glycine cleavage system is composed of four proteins: P, T, L and H. In this organism, the P 'protein' is a heterodimer of two subunits.

It carries out the reaction N(6)-[(R)-lipoyl]-L-lysyl-[glycine-cleavage complex H protein] + glycine + H(+) = N(6)-[(R)-S(8)-aminomethyldihydrolipoyl]-L-lysyl-[glycine-cleavage complex H protein] + CO2. Its function is as follows. The glycine cleavage system catalyzes the degradation of glycine. The P protein binds the alpha-amino group of glycine through its pyridoxal phosphate cofactor; CO(2) is released and the remaining methylamine moiety is then transferred to the lipoamide cofactor of the H protein. This chain is Probable glycine dehydrogenase (decarboxylating) subunit 1, found in Bacillus mycoides (strain KBAB4) (Bacillus weihenstephanensis).